Here is a 179-residue protein sequence, read N- to C-terminus: MVEDRLISGIEACVASFSREVSTGKESEIFLVDLAVKAAGRSVKIEVLVDSEQGIVISQCAALSRRIRDMIESDDELQEVYGEVFELMVSSPGLGGPIRHVRQYIRHTGRLLSVRYRDDAGSVHDVTGRLIEVDLAEGHEPFLVLEPVRSGRKKNGSLPPSRLKMMLDRIDKAVVQVEF.

The protein belongs to the RimP family.

The protein localises to the cytoplasm. Its function is as follows. Required for maturation of 30S ribosomal subunits. In Prosthecochloris aestuarii (strain DSM 271 / SK 413), this protein is Ribosome maturation factor RimP.